The chain runs to 309 residues: Porphobilinogen deaminase (309 aa).

Position 241 is an S-(dipyrrolylmethanemethyl)cysteine (Cys241).

This sequence belongs to the HMBS family. As to quaternary structure, monomer. Dipyrromethane is required as a cofactor.

It catalyses the reaction 4 porphobilinogen + H2O = hydroxymethylbilane + 4 NH4(+). It participates in porphyrin-containing compound metabolism; protoporphyrin-IX biosynthesis; coproporphyrinogen-III from 5-aminolevulinate: step 2/4. In terms of biological role, tetrapolymerization of the monopyrrole PBG into the hydroxymethylbilane pre-uroporphyrinogen in several discrete steps. This Bacillus mycoides (strain KBAB4) (Bacillus weihenstephanensis) protein is Porphobilinogen deaminase.